The following is a 298-amino-acid chain: NAD kinase (298 aa).

D80 (proton acceptor) is an active-site residue. Residues 80-81, 154-155, R182, D184, 195-200, A219, and Q253 contribute to the NAD(+) site; these read DG, ND, and TAYALS.

This sequence belongs to the NAD kinase family. A divalent metal cation is required as a cofactor.

Its subcellular location is the cytoplasm. It catalyses the reaction NAD(+) + ATP = ADP + NADP(+) + H(+). In terms of biological role, involved in the regulation of the intracellular balance of NAD and NADP, and is a key enzyme in the biosynthesis of NADP. Catalyzes specifically the phosphorylation on 2'-hydroxyl of the adenosine moiety of NAD to yield NADP. The chain is NAD kinase from Delftia acidovorans (strain DSM 14801 / SPH-1).